A 288-amino-acid chain; its full sequence is Homoserine kinase (288 aa).

79–89 (PLARGLGSSSS) provides a ligand contact to ATP.

This sequence belongs to the GHMP kinase family. Homoserine kinase subfamily.

The protein localises to the cytoplasm. It catalyses the reaction L-homoserine + ATP = O-phospho-L-homoserine + ADP + H(+). It functions in the pathway amino-acid biosynthesis; L-threonine biosynthesis; L-threonine from L-aspartate: step 4/5. In terms of biological role, catalyzes the ATP-dependent phosphorylation of L-homoserine to L-homoserine phosphate. The sequence is that of Homoserine kinase from Streptococcus gordonii (strain Challis / ATCC 35105 / BCRC 15272 / CH1 / DL1 / V288).